The primary structure comprises 129 residues: NADPH-dependent 7-cyano-7-deazaguanine reductase (129 aa).

The active-site Thioimide intermediate is C34. D41 serves as the catalytic Proton donor. Residues 56–58 and 75–76 each bind substrate; these read VEL and HE.

The protein belongs to the GTP cyclohydrolase I family. QueF type 1 subfamily.

Its subcellular location is the cytoplasm. The catalysed reaction is 7-aminomethyl-7-carbaguanine + 2 NADP(+) = 7-cyano-7-deazaguanine + 2 NADPH + 3 H(+). It functions in the pathway tRNA modification; tRNA-queuosine biosynthesis. Its function is as follows. Catalyzes the NADPH-dependent reduction of 7-cyano-7-deazaguanine (preQ0) to 7-aminomethyl-7-deazaguanine (preQ1). The chain is NADPH-dependent 7-cyano-7-deazaguanine reductase from Thioalkalivibrio sulfidiphilus (strain HL-EbGR7).